The chain runs to 418 residues: Putative ion-transport protein YfeO (418 aa).

12 consecutive transmembrane segments (helical) span residues 10-30 (LLLS…LIMV), 54-74 (DSPL…GLVI), 99-119 (ALPG…SLGP), 120-140 (EHPI…RLLP), 149-169 (ILAS…AALI), 186-206 (LFAP…FFHP), 223-243 (ILSG…AVWC), 258-278 (VFVL…GGPV), 300-320 (DYFL…ASGF), 322-342 (GGRI…LHEH), 343-363 (VPAV…VLVV), and 371-391 (LFMA…CIVM).

The protein belongs to the chloride channel (TC 2.A.49) family.

The protein localises to the cell membrane. This chain is Putative ion-transport protein YfeO, found in Escherichia coli O127:H6 (strain E2348/69 / EPEC).